The primary structure comprises 324 residues: NAC domain-containing protein 21/22 (324 aa).

The region spanning L19–K171 is the NAC domain. Residues R120 to D137 carry the Bipartite nuclear localization signal motif.

Dimer. Interacts with SINAT5. Post-translationally, ubiquitinated. The interaction with SINAT5 mediate its proteasome-dependent degradation. Predominantly expressed in the root tip and in lateral root initiation sites. Also detected in expanding cotyledon, and in leaf primordia.

Its subcellular location is the nucleus. In terms of biological role, transcriptional activator that mediates auxin signaling to promote lateral root development. Activates the expression of two downstream auxin-responsive genes, DBP and AIR3. The chain is NAC domain-containing protein 21/22 (NAC021) from Arabidopsis thaliana (Mouse-ear cress).